A 368-amino-acid polypeptide reads, in one-letter code: Germination protease (368 aa).

Positions 1–16 (MEKKKLDLSQYAVRTD) are excised as a propeptide.

It belongs to the peptidase A25 family. Homotetramer. Autoproteolytically processed. The inactive tetrameric zymogen termed p46 autoprocesses to a smaller form termed p41, which is active only during spore germination.

It carries out the reaction Endopeptidase action with P4 Glu or Asp, P1 preferably Glu &gt; Asp, P1' hydrophobic and P2' Ala.. Initiates the rapid degradation of small, acid-soluble proteins during spore germination. The chain is Germination protease from Bacillus licheniformis (strain ATCC 14580 / DSM 13 / JCM 2505 / CCUG 7422 / NBRC 12200 / NCIMB 9375 / NCTC 10341 / NRRL NRS-1264 / Gibson 46).